Consider the following 1442-residue polypeptide: ABC transporter G family member 35 (1442 aa).

One can recognise an ABC transporter 1 domain in the interval L169 to E442. G202–T209 serves as a coordination point for ATP. Residues E520–L733 form the ABC transmembrane type-2 1 domain. The next 7 helical transmembrane spans lie at F538–Y558, I573–M593, L619–V639, F657–T677, I683–L703, W714–F734, and I769–L789. The ABC transporter 2 domain occupies M840–P1092. Residue G885–T892 coordinates ATP. Positions G1165–Y1379 constitute an ABC transmembrane type-2 2 domain. 7 consecutive transmembrane segments (helical) span residues L1186–I1206, M1218–V1238, L1272–F1292, F1299–M1319, V1329–I1349, W1357–S1377, and P1414–I1434.

It belongs to the ABC transporter superfamily. ABCG family. PDR (TC 3.A.1.205) subfamily. Ubiquitous with higher levels in roots.

The protein localises to the membrane. Its function is as follows. May be a general defense protein. In Arabidopsis thaliana (Mouse-ear cress), this protein is ABC transporter G family member 35 (ABCG35).